Consider the following 112-residue polypeptide: UPF0122 protein CPR_1686 (112 aa).

It belongs to the UPF0122 family.

Functionally, might take part in the signal recognition particle (SRP) pathway. This is inferred from the conservation of its genetic proximity to ftsY/ffh. May be a regulatory protein. This Clostridium perfringens (strain SM101 / Type A) protein is UPF0122 protein CPR_1686.